A 324-amino-acid chain; its full sequence is Bile salt hydrolase/transferase (324 aa).

The active-site Nucleophile; acyl-thioester intermediate is the Cys-2. Deoxycholate is bound by residues Cys-2 and Arg-16. A taurine-binding site is contributed by Asn-79.

Belongs to the peptidase C59 family. As to quaternary structure, homotetramer. The tetramer consists of a dimer of dimers.

It carries out the reaction glycocholate + H2O = cholate + glycine. The catalysed reaction is glycodeoxycholate + H2O = deoxycholate + glycine. The enzyme catalyses chenodeoxycholate + glycine = glycochenodeoxycholate + H2O. It catalyses the reaction cholate + taurine = taurocholate + H2O. It carries out the reaction taurodeoxycholate + H2O = deoxycholate + taurine. The catalysed reaction is taurochenodeoxycholate + H2O = chenodeoxycholate + taurine. The enzyme catalyses an L-alpha-amino acid + cholate = an N-choloyl-L-alpha-amino acid + H2O. It catalyses the reaction an L-alpha-amino acid + taurocholate = an N-choloyl-L-alpha-amino acid + taurine. It carries out the reaction glycocholate + an L-alpha-amino acid = an N-choloyl-L-alpha-amino acid + glycine. The protein operates within lipid metabolism; bile acid biosynthesis. Possesses dual functions in bile acid metabolism. Acts as a bile salt hydrolase that catalyzes the deconjugation of glycine- and taurine-linked bile salts, which occurs naturally in the intestines of animals, releasing amino acid residues and deconjugated bile salts (bile acids). Can hydrolyze the amide bond in the bile salts glycocholate (GCA), glycodeoxycholate (GDCA), glycochenodeoxycholate (GCDCA), taurocholate (TCA), taurodeoxycholate (TDCA) and taurochenodeoxycholate (TCDCA). Shows a preference for glycine-conjugated bile acids as substrates. Also acts as an amine N-acyltransferase that conjugates a wide variety of amino acids to conjugated and non-conjugated bile acids, thus producing bacterial bile acid amidates (BBAAs) - also named microbially conjugated bile acids (MCBAs) - in the gastrointestinal tract. These BBAAs may facilitate communication between the microbiota and host through the activation of host ligand-activated transcription factors. This chain is Bile salt hydrolase/transferase, found in Lactiplantibacillus plantarum (strain ATCC BAA-793 / NCIMB 8826 / WCFS1) (Lactobacillus plantarum).